The primary structure comprises 153 residues: Transcriptional repressor NrdR (153 aa).

A zinc finger spans residues 3–34; sequence CPSCHHSGTRVLESRPVEEGRSIRRRRECEQC. In terms of domain architecture, ATP-cone spans 49–139; it reads LIVVKKEGTR…VYRQFKDINV (91 aa).

Belongs to the NrdR family. It depends on Zn(2+) as a cofactor.

In terms of biological role, negatively regulates transcription of bacterial ribonucleotide reductase nrd genes and operons by binding to NrdR-boxes. The polypeptide is Transcriptional repressor NrdR (Geobacillus kaustophilus (strain HTA426)).